Here is a 371-residue protein sequence, read N- to C-terminus: Queuine tRNA-ribosyltransferase (371 aa).

D90 acts as the Proton acceptor in catalysis. Residues 90–94 (DSGGF), D144, Q189, and G215 contribute to the substrate site. The tract at residues 246–252 (GVGTPEN) is RNA binding. D265 (nucleophile) is an active-site residue. The tract at residues 270 to 274 (TRNAR) is RNA binding; important for wobble base 34 recognition. The Zn(2+) site is built by C303, C305, C308, and H334.

The protein belongs to the queuine tRNA-ribosyltransferase family. In terms of assembly, homodimer. Within each dimer, one monomer is responsible for RNA recognition and catalysis, while the other monomer binds to the replacement base PreQ1. It depends on Zn(2+) as a cofactor.

The catalysed reaction is 7-aminomethyl-7-carbaguanine + guanosine(34) in tRNA = 7-aminomethyl-7-carbaguanosine(34) in tRNA + guanine. Its pathway is tRNA modification; tRNA-queuosine biosynthesis. Its function is as follows. Catalyzes the base-exchange of a guanine (G) residue with the queuine precursor 7-aminomethyl-7-deazaguanine (PreQ1) at position 34 (anticodon wobble position) in tRNAs with GU(N) anticodons (tRNA-Asp, -Asn, -His and -Tyr). Catalysis occurs through a double-displacement mechanism. The nucleophile active site attacks the C1' of nucleotide 34 to detach the guanine base from the RNA, forming a covalent enzyme-RNA intermediate. The proton acceptor active site deprotonates the incoming PreQ1, allowing a nucleophilic attack on the C1' of the ribose to form the product. After dissociation, two additional enzymatic reactions on the tRNA convert PreQ1 to queuine (Q), resulting in the hypermodified nucleoside queuosine (7-(((4,5-cis-dihydroxy-2-cyclopenten-1-yl)amino)methyl)-7-deazaguanosine). This Helicobacter pylori (strain G27) protein is Queuine tRNA-ribosyltransferase.